The chain runs to 921 residues: MLSIARKIFGTVNDRKLKPLQARVNRINALEPIMEALSDQSLKGKTAEFRKRLADGATLDSLLEEAFAVVREAAKRVNNMRHFDVQLMGGMILHSGAIAEMRTGEGKTLVATLAAYLNALEGKGVHVITVNDYLARRDADWMGRIYGALGMSTGVIVHGVSDEQRKAGYAADITYGTNNEFGFDYLRDNMKYSLDQMAQRGHHYAIVDEVDSILIDEARTPLIISGPTDDRSELYMAVDALIPRLEDSDFELDEKQRSVVFTETGSEKMEEWLTEAGVLEGSLWEPSNISLVHHSNQALRAHKLYARDKDYIVKDDSVMLIDEFSGRMMEGRRLSEGLHQAIEAKERVDIKPENQTLASITFQNYFRLYKKLAGMTGTALTEASEFADIYKLEVVDLPTNRPVRRLDEDDVVYRTAKAKYNEIIKEVRAANAKAQPILLGTASIEKSELLSHLLTAQRIPHKVLNARHHEQEAFIVAEAGVPGAVTVATNMAGRGTDIQLGGNFDMRLENERAAKEKALGRELSEGETSLLGAQIRADIEVKKKQALDAGGLYVLGTERHESRRIDNQLRGRTGRQGDPGKSKFYISIEDDLMRIFAADRMDAVMRRLGIKEDEGITHPWMNKAMETSQKKIEERNFEIRKNVLKYDDVINDQRKAIFEQRMEFLRSDDVSDVIEEMRESVIEALVARTMPEKAYAEQWDITGLEESLKTDLALDLPVREWAAEEGVANEEIAGRIREAVEGQYAELTRLIGEPQMRRIEKQFLLQVLDMRWREHLQQIDQLRSVIHLRSYGQRDPLNEFKREAFNLFDTLLGELRATVTRSLMHIRVQQAPQQQPQQVAPPPRPQPPQPAPQPPQQIRETKLDPDTGVNEMNPADKTQPPGPALHQAEDDWTNTPRNSACPCGSGKKYKHCHGAIETQKA.

ATP contacts are provided by residues glutamine 86, 104–108, and aspartate 497; that span reads GEGKT. A compositionally biased stretch (low complexity) spans 829–838; the sequence is QQAPQQQPQQ. The tract at residues 829–921 is disordered; it reads QQAPQQQPQQ…CHGAIETQKA (93 aa). Positions 839 to 855 are enriched in pro residues; sequence VAPPPRPQPPQPAPQPP. Residues cysteine 901, cysteine 903, cysteine 912, and histidine 913 each contribute to the Zn(2+) site.

Belongs to the SecA family. As to quaternary structure, monomer and homodimer. Part of the essential Sec protein translocation apparatus which comprises SecA, SecYEG and auxiliary proteins SecDF-YajC and YidC. It depends on Zn(2+) as a cofactor.

Its subcellular location is the cell inner membrane. It is found in the cytoplasm. It catalyses the reaction ATP + H2O + cellular proteinSide 1 = ADP + phosphate + cellular proteinSide 2.. In terms of biological role, part of the Sec protein translocase complex. Interacts with the SecYEG preprotein conducting channel. Has a central role in coupling the hydrolysis of ATP to the transfer of proteins into and across the cell membrane, serving both as a receptor for the preprotein-SecB complex and as an ATP-driven molecular motor driving the stepwise translocation of polypeptide chains across the membrane. The sequence is that of Protein translocase subunit SecA from Hyphomonas neptunium (strain ATCC 15444).